We begin with the raw amino-acid sequence, 538 residues long: Putative cysteine ligase BshC (538 aa).

It belongs to the BshC family.

Its function is as follows. Involved in bacillithiol (BSH) biosynthesis. May catalyze the last step of the pathway, the addition of cysteine to glucosamine malate (GlcN-Mal) to generate BSH. The protein is Putative cysteine ligase BshC of Halalkalibacterium halodurans (strain ATCC BAA-125 / DSM 18197 / FERM 7344 / JCM 9153 / C-125) (Bacillus halodurans).